A 206-amino-acid chain; its full sequence is Thymidylate kinase (206 aa).

11–18 (GIDGAGKT) serves as a coordination point for ATP.

This sequence belongs to the thymidylate kinase family.

The enzyme catalyses dTMP + ATP = dTDP + ADP. Functionally, phosphorylation of dTMP to form dTDP in both de novo and salvage pathways of dTTP synthesis. The polypeptide is Thymidylate kinase (Burkholderia cenocepacia (strain ATCC BAA-245 / DSM 16553 / LMG 16656 / NCTC 13227 / J2315 / CF5610) (Burkholderia cepacia (strain J2315))).